A 159-amino-acid polypeptide reads, in one-letter code: Transcriptional repressor NrdR (159 aa).

The segment at 3 to 34 (CPFCNAADSKVIDSRLAAEGCQIRRRRECISC) is a zinc-finger region. An ATP-cone domain is found at 49-139 (PRVIKSNGKN…VYQDFQDVEA (91 aa)).

The protein belongs to the NrdR family. Zn(2+) serves as cofactor.

Functionally, negatively regulates transcription of bacterial ribonucleotide reductase nrd genes and operons by binding to NrdR-boxes. The chain is Transcriptional repressor NrdR from Acinetobacter baylyi (strain ATCC 33305 / BD413 / ADP1).